A 158-amino-acid polypeptide reads, in one-letter code: Acetolactate synthase small subunit (158 aa).

In terms of domain architecture, ACT spans 4–78; sequence ILSVLLENES…DVLRVIKVGQ (75 aa).

This sequence belongs to the acetolactate synthase small subunit family. Dimer of large and small chains.

It carries out the reaction 2 pyruvate + H(+) = (2S)-2-acetolactate + CO2. Its pathway is amino-acid biosynthesis; L-isoleucine biosynthesis; L-isoleucine from 2-oxobutanoate: step 1/4. The protein operates within amino-acid biosynthesis; L-valine biosynthesis; L-valine from pyruvate: step 1/4. The polypeptide is Acetolactate synthase small subunit (ilvH) (Buchnera aphidicola subsp. Schizaphis graminum (strain Sg)).